Reading from the N-terminus, the 178-residue chain is MSVIRLHQYQVVGRALPTEKDEQPKIYRMKLWATNEVLAKSKFWYYLRRQKKVKKSNGQMLAINEIFEKNPTTIKNFGIWLRYQSRTGYHNMYKEYRDTTLNGAVEQMYTEMASRHRVRFPCIQIIKTATVPASLCKRESTKQFHNSKIKFPLVFRKVRPPTRKLKTTFKANKPNLFM.

This sequence belongs to the eukaryotic ribosomal protein eL20 family.

The sequence is that of Large ribosomal subunit protein eL20w (RPL18AD) from Arabidopsis thaliana (Mouse-ear cress).